A 696-amino-acid chain; its full sequence is MVHTVQAECCGKTITIETGKIAKQASGAVMIKSGDTMVLVTAVAMKSAKEGQGFFPLTVNYQEKAYAGGRIPGSFFKREGRPSDNETLTCRLIDRPIRPLFPENFLNDTQIMATVVSADKDNDPGILSMIGASAALMVSDVPFAGPIAGVKVGRVDGQFIANPTAEQEEKSDLEIVIAASQDAILMVEGSACEVSEDDLLEAIFFGHKAVQPVLAAQLELAKKVGTSKREIPAPVVNEALKARVSALAKEGMKQAVRIKTKVERHLAIDAIADETVAALSAEFEGSEKEIKGFIEDLEYDLVREHIIKDGQRIDGRDTKTIRAISTEVSLLPRAHGSALFTRGETQSIVAATLGTSVDEQRIDSLYGDSRKKFMLHYNFPPYSVGETSFRLAPGRREIGHGMLAERALQQVLPKHDDFPYTIRIVSDITESNGSSSMATVCGGSLSMMDAGIPIKAPVAGIAMGLIKEGDDFAILSDILGDEDHLGDMDFKVAGTAEGVTALQMDIKIGGVTREIMSAALAQAKAGRIHILGEMAKTIGASRGDLSAFAPRITTIWVKVDKIRDVIGSGGKNIRSVTEATGVSIDIDDTGKINIASTNKEACDLAIKMIRNLTAEAEEGKLYMGTVKKIMEFGAFVEIFPGTDGLVHVSELDTERVKNVSDILKEGDKVLVKCIGIDKQGKIKLSRKEALGLTFTE.

Residues D483 and D489 each coordinate Mg(2+). The KH domain occupies 550 to 609; it reads PRITTIWVKVDKIRDVIGSGGKNIRSVTEATGVSIDIDDTGKINIASTNKEACDLAIKMI. The S1 motif domain maps to 619–687; that stretch reads GKLYMGTVKK…KQGKIKLSRK (69 aa).

It belongs to the polyribonucleotide nucleotidyltransferase family. Mg(2+) serves as cofactor.

The protein resides in the cytoplasm. The enzyme catalyses RNA(n+1) + phosphate = RNA(n) + a ribonucleoside 5'-diphosphate. In terms of biological role, involved in mRNA degradation. Catalyzes the phosphorolysis of single-stranded polyribonucleotides processively in the 3'- to 5'-direction. The sequence is that of Polyribonucleotide nucleotidyltransferase from Citrifermentans bemidjiense (strain ATCC BAA-1014 / DSM 16622 / JCM 12645 / Bem) (Geobacter bemidjiensis).